We begin with the raw amino-acid sequence, 150 residues long: MSDWDSVTIIGQKARIGGGGPRQNVAKTQAELNAARRSGNVVGTEKKYGSTNTKSNPEGQRLTKLDAVDDVVPTKKLDMNVGKAIQQARQEKKLTQKDLATKINEKPNVINDYEAGRAVPNQQLLGKLERALGVKLRGKNIGEPLFAKKK.

The interval 32–59 is disordered; sequence LNAARRSGNVVGTEKKYGSTNTKSNPEG. Residues 49-58 are compositionally biased toward polar residues; sequence GSTNTKSNPE. Residues 85 to 139 enclose the HTH cro/C1-type domain; it reads IQQARQEKKLTQKDLATKINEKPNVINDYEAGRAVPNQQLLGKLERALGVKLRGK. The segment at residues 96–115 is a DNA-binding region (H-T-H motif); that stretch reads QKDLATKINEKPNVINDYEA.

This sequence belongs to the MBF1 family.

Its function is as follows. Transcriptional coactivator that stimulates GCN4-dependent transcriptional activity by bridging the DNA-binding region of GCN4 and TBP (SPT15), thereby recruiting TBP to GCN4-bound promoters. Involved in induction of the ribosome quality control (RQC) pathway; a pathway that degrades nascent peptide chains during problematic translation. Required to prevent stalled ribosomes from frameshifting. The chain is Multiprotein-bridging factor 1 (MBF1) from Debaryomyces hansenii (strain ATCC 36239 / CBS 767 / BCRC 21394 / JCM 1990 / NBRC 0083 / IGC 2968) (Yeast).